A 343-amino-acid polypeptide reads, in one-letter code: N-acetyl-gamma-glutamyl-phosphate reductase (343 aa).

C149 is a catalytic residue.

The protein belongs to the NAGSA dehydrogenase family. Type 1 subfamily.

It localises to the cytoplasm. It catalyses the reaction N-acetyl-L-glutamate 5-semialdehyde + phosphate + NADP(+) = N-acetyl-L-glutamyl 5-phosphate + NADPH + H(+). The protein operates within amino-acid biosynthesis; L-arginine biosynthesis; N(2)-acetyl-L-ornithine from L-glutamate: step 3/4. Its function is as follows. Catalyzes the NADPH-dependent reduction of N-acetyl-5-glutamyl phosphate to yield N-acetyl-L-glutamate 5-semialdehyde. The chain is N-acetyl-gamma-glutamyl-phosphate reductase from Methanococcus maripaludis (strain C7 / ATCC BAA-1331).